Reading from the N-terminus, the 374-residue chain is Queuine tRNA-ribosyltransferase (374 aa).

The active-site Proton acceptor is the Asp-89. Residues 89–93 (DSGGF), Asp-143, Gln-187, and Gly-214 each bind substrate. The interval 245 to 251 (GVGKPED) is RNA binding. Asp-264 (nucleophile) is an active-site residue. An RNA binding; important for wobble base 34 recognition region spans residues 269–273 (TRNAR). Residues Cys-302, Cys-304, Cys-307, and His-333 each contribute to the Zn(2+) site.

Belongs to the queuine tRNA-ribosyltransferase family. Homodimer. Within each dimer, one monomer is responsible for RNA recognition and catalysis, while the other monomer binds to the replacement base PreQ1. Zn(2+) serves as cofactor.

The catalysed reaction is 7-aminomethyl-7-carbaguanine + guanosine(34) in tRNA = 7-aminomethyl-7-carbaguanosine(34) in tRNA + guanine. Its pathway is tRNA modification; tRNA-queuosine biosynthesis. Catalyzes the base-exchange of a guanine (G) residue with the queuine precursor 7-aminomethyl-7-deazaguanine (PreQ1) at position 34 (anticodon wobble position) in tRNAs with GU(N) anticodons (tRNA-Asp, -Asn, -His and -Tyr). Catalysis occurs through a double-displacement mechanism. The nucleophile active site attacks the C1' of nucleotide 34 to detach the guanine base from the RNA, forming a covalent enzyme-RNA intermediate. The proton acceptor active site deprotonates the incoming PreQ1, allowing a nucleophilic attack on the C1' of the ribose to form the product. After dissociation, two additional enzymatic reactions on the tRNA convert PreQ1 to queuine (Q), resulting in the hypermodified nucleoside queuosine (7-(((4,5-cis-dihydroxy-2-cyclopenten-1-yl)amino)methyl)-7-deazaguanosine). In Shewanella sp. (strain W3-18-1), this protein is Queuine tRNA-ribosyltransferase.